Reading from the N-terminus, the 375-residue chain is 1-deoxy-D-xylulose 5-phosphate reductoisomerase (375 aa).

Residues Thr-12, Gly-13, Ser-14, Ile-15, Asn-39, and Asn-115 each contribute to the NADPH site. Lys-116 contributes to the 1-deoxy-D-xylulose 5-phosphate binding site. Glu-117 is a binding site for NADPH. Asp-141 is a Mn(2+) binding site. Residues Ser-142, Glu-143, Ser-163, and His-186 each contribute to the 1-deoxy-D-xylulose 5-phosphate site. Position 143 (Glu-143) interacts with Mn(2+). Residue Gly-192 participates in NADPH binding. 1-deoxy-D-xylulose 5-phosphate contacts are provided by Ser-199, Asn-204, Lys-205, and Glu-208. Glu-208 serves as a coordination point for Mn(2+).

The protein belongs to the DXR family. It depends on Mg(2+) as a cofactor. Mn(2+) is required as a cofactor.

It carries out the reaction 2-C-methyl-D-erythritol 4-phosphate + NADP(+) = 1-deoxy-D-xylulose 5-phosphate + NADPH + H(+). It participates in isoprenoid biosynthesis; isopentenyl diphosphate biosynthesis via DXP pathway; isopentenyl diphosphate from 1-deoxy-D-xylulose 5-phosphate: step 1/6. Catalyzes the NADPH-dependent rearrangement and reduction of 1-deoxy-D-xylulose-5-phosphate (DXP) to 2-C-methyl-D-erythritol 4-phosphate (MEP). In Thermotoga neapolitana (strain ATCC 49049 / DSM 4359 / NBRC 107923 / NS-E), this protein is 1-deoxy-D-xylulose 5-phosphate reductoisomerase.